Consider the following 310-residue polypeptide: D-apiose import binding protein (310 aa).

A signal peptide spans 1–21; it reads MKLLKASLVALSLAASTFVYA. Residues Asn35, 111–112, 158–160, Arg164, Asn214, Asp239, and Gln260 each bind D-apiofuranose; these read DR and DTN.

The protein belongs to the bacterial solute-binding protein 2 family.

The protein resides in the periplasm. In terms of biological role, part of an ABC transporter complex involved in D-apiose import. Binds D-apiose, D-ribose and D-ribulose. This is D-apiose import binding protein from Actinobacillus succinogenes (strain ATCC 55618 / DSM 22257 / CCUG 43843 / 130Z).